A 2699-amino-acid polypeptide reads, in one-letter code: UPF0648 protein C3H5.09c (2699 aa).

N-linked (GlcNAc...) asparagine glycosylation is present at Asn21. The chain crosses the membrane as a helical span at residues 24–44 (FVWVVIATGFLFHLVLFVLSY). N-linked (GlcNAc...) asparagine glycosylation is found at Asn288, Asn293, Asn334, Asn345, Asn433, Asn507, Asn551, Asn655, Asn760, Asn993, Asn1000, Asn1003, Asn1006, and Asn1009. The disordered stretch occupies residues 975 to 1021 (KAKDPSPKSASESSSFYQNGSDIDDNDSNSSNTSNHTTENANAQQRK). Positions 981-995 (PKSASESSSFYQNGS) are enriched in low complexity. The stretch at 1006 to 1033 (NTSNHTTENANAQQRKLEDLNRSFEDFL) forms a coiled coil. Positions 1010–1019 (HTTENANAQQ) are enriched in polar residues. Asn1026, Asn1039, Asn1046, Asn1236, Asn1255, Asn1344, Asn1527, Asn1595, Asn1791, Asn1916, Asn2032, Asn2048, Asn2256, Asn2285, Asn2388, Asn2407, Asn2417, Asn2508, and Asn2622 each carry an N-linked (GlcNAc...) asparagine glycan. Positions 1758 to 1818 (QYELLQKRRK…TLSDHYRLLE (61 aa)) form a coiled coil. The tract at residues 2393–2447 (FPHIYSRNHDKRKENGSQGEADNSNYSGSLMRRRTNDQEEDALATPSSSRRDSRS) is disordered. Residues 2408–2420 (GSQGEADNSNYSG) show a composition bias toward polar residues. 2 disordered regions span residues 2606–2632 (AEEN…LNSP) and 2647–2676 (ADIV…ARVD). Positions 2617–2632 (SAISRNHSTRSSLNSP) are enriched in polar residues.

This sequence belongs to the UPF0648 family.

It localises to the membrane. The sequence is that of UPF0648 protein C3H5.09c from Schizosaccharomyces pombe (strain 972 / ATCC 24843) (Fission yeast).